The sequence spans 472 residues: Pentatricopeptide repeat-containing protein At5g46100 (472 aa).

11 PPR repeats span residues 50-84 (DQSS…NCVV), 85-119 (SEDI…DCDP), 120-154 (SQKA…GLPP), 155-190 (TVAS…GCDP), 191-225 (DSYT…DCAP), 226-260 (TVVT…GIEP), 261-295 (NVFT…GCRP), 296-330 (NMVT…GLKP), 331-365 (DAGL…GITP), 373-406 (HVKT…GISV), and 407-441 (EVET…GCIP).

This sequence belongs to the PPR family. P subfamily.

In Arabidopsis thaliana (Mouse-ear cress), this protein is Pentatricopeptide repeat-containing protein At5g46100.